The primary structure comprises 69 residues: Small ribosomal subunit protein bS21 (69 aa).

Residues 49–69 are disordered; the sequence is IESAKRKAEKKKRLFSKKDKA.

The protein belongs to the bacterial ribosomal protein bS21 family.

This chain is Small ribosomal subunit protein bS21, found in Leptospira borgpetersenii serovar Hardjo-bovis (strain JB197).